The chain runs to 347 residues: GMP reductase (347 aa).

An NADP(+)-binding site is contributed by 108–131 (ADFEKTVQILALNPALNFVCIDVA). K(+)-binding residues include Gly181 and Gly183. Cys186 acts as the Thioimidate intermediate in catalysis. Position 216-239 (216-239 (IVSDGGCTMPGDVAKAFGGGADFV)) interacts with NADP(+).

It belongs to the IMPDH/GMPR family. GuaC type 1 subfamily. As to quaternary structure, homotetramer.

The enzyme catalyses IMP + NH4(+) + NADP(+) = GMP + NADPH + 2 H(+). In terms of biological role, catalyzes the irreversible NADPH-dependent deamination of GMP to IMP. It functions in the conversion of nucleobase, nucleoside and nucleotide derivatives of G to A nucleotides, and in maintaining the intracellular balance of A and G nucleotides. The protein is GMP reductase of Salmonella choleraesuis (strain SC-B67).